Here is a 488-residue protein sequence, read N- to C-terminus: Glutamyl-tRNA(Gln) amidotransferase subunit A (488 aa).

Residues lysine 77 and serine 152 each act as charge relay system in the active site. Residue serine 176 is the Acyl-ester intermediate of the active site.

This sequence belongs to the amidase family. GatA subfamily. Heterotrimer of A, B and C subunits.

It catalyses the reaction L-glutamyl-tRNA(Gln) + L-glutamine + ATP + H2O = L-glutaminyl-tRNA(Gln) + L-glutamate + ADP + phosphate + H(+). Allows the formation of correctly charged Gln-tRNA(Gln) through the transamidation of misacylated Glu-tRNA(Gln) in organisms which lack glutaminyl-tRNA synthetase. The reaction takes place in the presence of glutamine and ATP through an activated gamma-phospho-Glu-tRNA(Gln). This is Glutamyl-tRNA(Gln) amidotransferase subunit A from Streptococcus pyogenes serotype M5 (strain Manfredo).